The sequence spans 855 residues: MTANKQVRAVLLAALMVFSVFAGSIAFTGTAAAAATSATVSPDTVDKGPSASVDVTVNSGGANDVHVWLDLNDDGYYNASEPNSTDTAAATATLSLSIPESVSAGEYNVSAAESASLTAGTTQQEAYDTLDVVAANPADFNSATHFDDGTPKVEVAFDEAVTVNEMNVTDGETNLSQSVSVSSGQVNVTLSQVYTDDLEVTYNVTDTSGNTATATEDVTFAPIYVANESNNTAYQGSNVAVVASAVDTDVEVEGADDDNNYQFSGSTGPNSQVFVFDTDGKTLDTYQFTVGGAQKAQVDVRDLGLELTVDDLNITTKDGIEGSVSANAGDRTVDIVALDDDGDEVEDTETTVTLNGQGEADFNLSSVDAGEYTIEATDAFTGVTLESDTVTVSKAKDSTGDFASSVINEQVGDVAEITVTLDGTDTGTVTIGDYSLGYSANVTVEDDNDDGEVVLLFNSYAPKKTSSFDVDDSDDEYTVEDITTDIPSGETLDAGDYDLEVATGGEADNVATLVLEDRSTDSVATWTAPTGADLTETEDVYDAIENENLTQTDSLANGDVVVTQVSATGLEGAFDASNFDALSGTQFNLTVEQTNPGPNRDAKVLGINSSSATIIADGDNDTYFIVYDLDDVSASRTDYYDNTSTLYEVEDDDAFNATFTVLEDGDLAEDDESASDEFEVVTPELELDQDEFAVGNAAEQSISGTATVAPGTELTIRVTSDGDTQPRFLKTASVYVQADGTFSSAFDFSEQNLNDTFEVTASVDSGTADDATADGIVGEAMETTTAAETTTTEESTETTTTEESTEEPTETATATEEPTEEATEETTESSTPGFGVVVALVALVAAALLAVRRDN.

An N-terminal signal peptide occupies residues 1–22 (MTANKQVRAVLLAALMVFSVFA). 19 N-linked (GlcNAc...) asparagine glycosylation sites follow: asparagine 78, asparagine 83, asparagine 108, asparagine 167, asparagine 174, asparagine 187, asparagine 203, asparagine 227, asparagine 230, asparagine 313, asparagine 363, asparagine 441, asparagine 548, asparagine 588, asparagine 608, asparagine 620, asparagine 642, asparagine 656, and asparagine 754. A compositionally biased stretch (low complexity) spans 782-802 (ETTTAAETTTTEESTETTTTE). A disordered region spans residues 782–831 (ETTTAAETTTTEESTETTTTEESTEEPTETATATEEPTEEATEETTESST). Positions 817–827 (EPTEEATEETT) are enriched in acidic residues. Residues 831-851 (TPGFGVVVALVALVAAALLAV) form a helical membrane-spanning segment. A PGF sorting signal motif is present at residues 832–834 (PGF).

The protein belongs to the halobacterial S-layer protein family. Glycosylated. In terms of processing, cleaved by the archaeosortase ArtA at the C-terminus, with removal of a short hydrophobic segment. Post-translationally, lipidation.

The protein localises to the secreted. It is found in the cell wall. The protein resides in the S-layer. Its subcellular location is the cell membrane. In terms of biological role, S-layer protein. The S-layer is a paracrystalline mono-layered assembly of proteins which coats the surface of the cell. The protein is Cell surface glycoprotein of Haloferax gibbonsii.